The following is a 320-amino-acid chain: Beta-ketoacyl-[acyl-carrier-protein] synthase III (320 aa).

Catalysis depends on residues C112 and H245. Residues 246-250 (QANIR) form an ACP-binding region. N275 is an active-site residue.

Belongs to the thiolase-like superfamily. FabH family. Homodimer.

It localises to the cytoplasm. It carries out the reaction malonyl-[ACP] + acetyl-CoA + H(+) = 3-oxobutanoyl-[ACP] + CO2 + CoA. The protein operates within lipid metabolism; fatty acid biosynthesis. Functionally, catalyzes the condensation reaction of fatty acid synthesis by the addition to an acyl acceptor of two carbons from malonyl-ACP. Catalyzes the first condensation reaction which initiates fatty acid synthesis and may therefore play a role in governing the total rate of fatty acid production. Possesses both acetoacetyl-ACP synthase and acetyl transacylase activities. Its substrate specificity determines the biosynthesis of branched-chain and/or straight-chain of fatty acids. This chain is Beta-ketoacyl-[acyl-carrier-protein] synthase III, found in Streptococcus thermophilus (strain CNRZ 1066).